The sequence spans 289 residues: MNGILNVYKPIGITSFDVVCQIKKITGIKKIGHTGTLDPLACGVLPVCIGKGTKVVDYLMKDFKVYDATFKLGIITDTYDREGKELSISEVNVSLDEIECAVNSFLGDSFQVPPMYSALKVNGKRLYELAREGKSIEREARPITIYDINILHIDIPYVKFRVKCSKGTYIRSLCYDIGSNLKCGATMWDLERVQSGAFTKENSIELNKLTTDNINDYIISIDESLNQYDKAFVSSKCEKLLVNGVRIGDKRLLPNLDINKMYRIYSEDNKFLGLGMRNSKGLKIEKLLL.

D38 acts as the Nucleophile in catalysis.

It belongs to the pseudouridine synthase TruB family. Type 1 subfamily.

The catalysed reaction is uridine(55) in tRNA = pseudouridine(55) in tRNA. In terms of biological role, responsible for synthesis of pseudouridine from uracil-55 in the psi GC loop of transfer RNAs. The polypeptide is tRNA pseudouridine synthase B (Clostridium novyi (strain NT)).